Here is a 223-residue protein sequence, read N- to C-terminus: Protein-L-isoaspartate O-methyltransferase (223 aa).

Ser70 is an active-site residue.

It belongs to the methyltransferase superfamily. L-isoaspartyl/D-aspartyl protein methyltransferase family.

Its subcellular location is the cytoplasm. The catalysed reaction is [protein]-L-isoaspartate + S-adenosyl-L-methionine = [protein]-L-isoaspartate alpha-methyl ester + S-adenosyl-L-homocysteine. Functionally, catalyzes the methyl esterification of L-isoaspartyl residues in peptides and proteins that result from spontaneous decomposition of normal L-aspartyl and L-asparaginyl residues. It plays a role in the repair and/or degradation of damaged proteins. The chain is Protein-L-isoaspartate O-methyltransferase from Saccharophagus degradans (strain 2-40 / ATCC 43961 / DSM 17024).